The primary structure comprises 556 residues: Protein F37C4.5 (556 aa).

Position 2 is an N-acetylalanine (alanine 2).

The protein is Protein F37C4.5 of Caenorhabditis elegans.